Here is a 406-residue protein sequence, read N- to C-terminus: Pyridinium-3,5-bisthiocarboxylic acid mononucleotide nickel insertion protein (406 aa).

It belongs to the LarC family.

It catalyses the reaction Ni(II)-pyridinium-3,5-bisthiocarboxylate mononucleotide = pyridinium-3,5-bisthiocarboxylate mononucleotide + Ni(2+). Functionally, involved in the biosynthesis of a nickel-pincer cofactor ((SCS)Ni(II) pincer complex). Binds Ni(2+), and functions in nickel delivery to pyridinium-3,5-bisthiocarboxylic acid mononucleotide (P2TMN), to form the mature cofactor. Is thus probably required for the activation of nickel-pincer cofactor-dependent enzymes. In Akkermansia muciniphila (strain ATCC BAA-835 / DSM 22959 / JCM 33894 / BCRC 81048 / CCUG 64013 / CIP 107961 / Muc), this protein is Pyridinium-3,5-bisthiocarboxylic acid mononucleotide nickel insertion protein.